Here is a 178-residue protein sequence, read N- to C-terminus: MSEVRLPPLRALDDFVLGSARLAAPDPCDPQRWCHRVINNLLYYQTNYLLCFGIGLALAGYVRPLHTLLSALVVAVALGMLVWAAETRAAVRRCRRSHPAACLAAVLAVGLLVLWVVGGACTFLLSIAGPVLLILVHASLRLRNLKNKIENKIESIGLKRTPMGLLLEALGQEQEAGS.

Over 1-41 (MSEVRLPPLRALDDFVLGSARLAAPDPCDPQRWCHRVINNL) the chain is Cytoplasmic. A helical transmembrane segment spans residues 42–62 (LYYQTNYLLCFGIGLALAGYV). The Extracellular segment spans residues 63 to 64 (RP). Residues 65–85 (LHTLLSALVVAVALGMLVWAA) traverse the membrane as a helical segment. Over 86 to 96 (ETRAAVRRCRR) the chain is Cytoplasmic. A helical membrane pass occupies residues 97 to 119 (SHPAACLAAVLAVGLLVLWVVGG). The Extracellular segment spans residues 120-122 (ACT). The helical transmembrane segment at 123 to 140 (FLLSIAGPVLLILVHASL) threads the bilayer. At 141-178 (RLRNLKNKIENKIESIGLKRTPMGLLLEALGQEQEAGS) the chain is on the cytoplasmic side.

This sequence belongs to the PRA1 family. Interacts with CCR5 and GDE1.

It is found in the endosome membrane. In terms of biological role, may be involved in ER/Golgi transport and vesicular traffic. Plays a proapoptotic role in cerulenin-induced neuroblastoma apoptosis. This is PRA1 family protein 2 (PRAF2) from Macaca fascicularis (Crab-eating macaque).